The chain runs to 476 residues: Thymidine phosphorylase (476 aa).

Positions 1–11 (MAAPGTPPPLA) are enriched in pro residues. Positions 1–26 (MAAPGTPPPLAPETAGADSGGGSGEH) are disordered. Residues threonine 6 and threonine 475 each carry the phosphothreonine modification.

This sequence belongs to the thymidine/pyrimidine-nucleoside phosphorylase family. Homodimer.

The catalysed reaction is thymidine + phosphate = 2-deoxy-alpha-D-ribose 1-phosphate + thymine. Its pathway is pyrimidine metabolism; dTMP biosynthesis via salvage pathway; dTMP from thymine: step 1/2. Catalyzes the reversible phosphorolysis of thymidine. The produced molecules are then utilized as carbon and energy sources or in the rescue of pyrimidine bases for nucleotide synthesis. The chain is Thymidine phosphorylase (Tymp) from Rattus norvegicus (Rat).